Here is a 1323-residue protein sequence, read N- to C-terminus: Alpha-factor-transporting ATPase (1323 aa).

Residues 1 to 10 (MFQEKSEKSS) show a composition bias toward basic and acidic residues. Residues 1-23 (MFQEKSEKSSFPKRSSSLRSPSD) are disordered. A compositionally biased stretch (low complexity) spans 12–23 (PKRSSSLRSPSD). Asn37 carries an N-linked (GlcNAc...) asparagine glycan. Residues 42–62 (WPLILVGILLMGGSAIATLMN) form a helical membrane-spanning segment. The 293-residue stretch at 45–337 (ILVGILLMGG…ITELLAILNT (293 aa)) folds into the ABC transmembrane type-1 1 domain. Residue Asn83 is glycosylated (N-linked (GlcNAc...) asparagine). The helical transmembrane segment at 93-113 (LCVGLIGIGCCKMILVWLGMF) threads the bilayer. Asn136 carries an N-linked (GlcNAc...) asparagine glycan. The next 4 membrane-spanning stretches (helical) occupy residues 169-189 (ILAS…MSFY), 192-212 (WSTT…GWYF), 281-301 (VLKT…NYLL), and 315-335 (FSSC…LAIL). Residues 373–609 (IYFKNVWFES…EIVQNYKSQG (237 aa)) enclose the ABC transporter 1 domain. An ATP-binding site is contributed by 408–415 (GKSGSGKS). Asn450 carries N-linked (GlcNAc...) asparagine glycosylation. Residues 677–697 (LLGFGILLAIFQGVSSPVFSY) traverse the membrane as a helical segment. Residues 678–969 (LGFGILLAIF…LIHQLPEITR (292 aa)) enclose the ABC transmembrane type-1 2 domain. The N-linked (GlcNAc...) asparagine glycan is linked to Asn714. Residues 724-744 (CISLSIAIFTGVTSYLSEFIL) traverse the membrane as a helical segment. Residues Asn777 and Asn789 are each glycosylated (N-linked (GlcNAc...) asparagine). 3 consecutive transmembrane segments (helical) span residues 801–821 (FFPL…WSIV), 828–848 (LVGI…GKIL), and 909–929 (IGFA…LFYG). An N-linked (GlcNAc...) asparagine glycan is attached at Asn939. A helical transmembrane segment spans residues 941–961 (SQLLQVITLLSFTISNASILI). 3 N-linked (GlcNAc...) asparagine glycosylation sites follow: Asn991, Asn1030, and Asn1039. An ABC transporter 2 domain is found at 1035 to 1321 (ISFNNVSFSY…DGEFTKITKT (287 aa)). 1071–1078 (GQSGSGKS) contacts ATP. Residue Asn1097 is glycosylated (N-linked (GlcNAc...) asparagine). The chain crosses the membrane as a helical span at residues 1120 to 1140 (GLLCQTIAIVPQFPKFFSGTI). Asn1143, Asn1149, and Asn1157 each carry an N-linked (GlcNAc...) asparagine glycan. A helical membrane pass occupies residues 1170–1190 (ILKLVNLHQFIVSLPQGLLTI). Asn1192 carries N-linked (GlcNAc...) asparagine glycosylation. Over residues 1194 to 1208 (SDNDNDNGNENENEN) the composition is skewed to acidic residues. The tract at residues 1194-1217 (SDNDNDNGNENENENENGNTISTS) is disordered.

Belongs to the ABC transporter superfamily. Alpha-factor sex pheromone exporter (TC 3.A.1.206) family.

It localises to the membrane. It catalyses the reaction an [alpha-factor](in) + ATP + H2O = an [alpha-factor](out) + ADP + phosphate + H(+). In Candida albicans (strain WO-1) (Yeast), this protein is Alpha-factor-transporting ATPase (HST6).